A 496-amino-acid polypeptide reads, in one-letter code: Galactokinase (496 aa).

Residue alanine 2 is modified to N-acetylalanine. Alpha-D-galactose contacts are provided by arginine 56, glutamate 62, histidine 63, and aspartate 65. Glycine 161, glycine 163, serine 165, and serine 166 together coordinate ATP. Residue aspartate 210 coordinates alpha-D-galactose. The active-site Proton acceptor is aspartate 210. ATP contacts are provided by serine 252, glutamine 253, and lysine 254. Tyrosine 262 serves as a coordination point for alpha-D-galactose.

The protein belongs to the GHMP kinase family. GalK subfamily. Mg(2+) is required as a cofactor. Requires Mn(2+) as cofactor. It depends on Ca(2+) as a cofactor. In terms of tissue distribution, expressed in roots, stems, leaves, flowers and young siliques. Higher expression in the elongating middle stem region than in the lower or upper stem region.

It catalyses the reaction alpha-D-galactose + ATP = alpha-D-galactose 1-phosphate + ADP + H(+). The protein operates within carbohydrate metabolism; galactose metabolism. Its function is as follows. Sugar-1-kinase with a very high substrate specificity for the alpha-anomeric configuration of D-galacose (D-Gal). Also efficiently converts 2-deoxy-D-Gal to 2-deoxy-D-al-1-phosphate. This chain is Galactokinase (GAL1), found in Arabidopsis thaliana (Mouse-ear cress).